A 240-amino-acid chain; its full sequence is Probable transcriptional regulatory protein Hac_0344 (240 aa).

It belongs to the TACO1 family.

It is found in the cytoplasm. In Helicobacter acinonychis (strain Sheeba), this protein is Probable transcriptional regulatory protein Hac_0344.